A 329-amino-acid chain; its full sequence is MSPRPLKVAVTGAAGQIGYSLLFRLASGSLLGLDRPIELRLLEIEPALKALEGVVMELDDCAFLLLAGVEIGADPNKVFDGVNLALLVGARPRGPGMERGDLLEANGAIFTAQGKALNAVAAADIRVGVTGNPANTNALIAMTNAPDIPRERFSALTRLDHNRAIAQLATKTGSAVTDIRKMTIWGNHSATQYPDVFHAEIGGKNAAEVVGDQAWIEDYFIPTVAKRGAAIIDARGASSAASAASATIDAARDWLLGTPEGNWVSMAVVSDGSYGVPEGLISSFPVTTTDGDWTIVRGLGIDDFSRGRIDKSTAELADERMAVKQLGLI.

Glycine 12–glycine 18 contacts NAD(+). The substrate site is built by arginine 93 and arginine 99. NAD(+) is bound by residues asparagine 106, glutamine 113, and threonine 130–asparagine 132. Positions 132 and 163 each coordinate substrate. Histidine 188 functions as the Proton acceptor in the catalytic mechanism.

Belongs to the LDH/MDH superfamily. MDH type 2 family.

The enzyme catalyses (S)-malate + NAD(+) = oxaloacetate + NADH + H(+). Its function is as follows. Catalyzes the reversible oxidation of malate to oxaloacetate. The protein is Malate dehydrogenase of Mycobacterium leprae (strain TN).